We begin with the raw amino-acid sequence, 246 residues long: Cell division protein ZapD (246 aa).

The protein belongs to the ZapD family. In terms of assembly, interacts with FtsZ.

The protein resides in the cytoplasm. In terms of biological role, cell division factor that enhances FtsZ-ring assembly. Directly interacts with FtsZ and promotes bundling of FtsZ protofilaments, with a reduction in FtsZ GTPase activity. The chain is Cell division protein ZapD from Vibrio vulnificus (strain CMCP6).